The primary structure comprises 156 residues: Protein-export protein SecB (156 aa).

Belongs to the SecB family. As to quaternary structure, homotetramer, a dimer of dimers. One homotetramer interacts with 1 SecA dimer.

Its subcellular location is the cytoplasm. Functionally, one of the proteins required for the normal export of preproteins out of the cell cytoplasm. It is a molecular chaperone that binds to a subset of precursor proteins, maintaining them in a translocation-competent state. It also specifically binds to its receptor SecA. The chain is Protein-export protein SecB from Serratia proteamaculans (strain 568).